Reading from the N-terminus, the 305-residue chain is Peroxisome assembly protein 26 (305 aa).

The disordered stretch occupies residues 1–20 (MKSDSSTSAAPLRGLGGPLR). Residues 1–246 (MKSDSSTSAA…RQLWDSAVSH (246 aa)) are Cytoplasmic-facing. The chain crosses the membrane as a helical; Signal-anchor for type II membrane protein span at residues 247 to 267 (FFSLPFKKSLLAALILCLLVV). Over 268–305 (RFDPASPSSLHFLYKLAQLFRWIRKAAFSRLYQLRIRD) the chain is Peroxisomal matrix.

This sequence belongs to the peroxin-26 family. In terms of assembly, interacts (via its cytoplasmic domain) with PEX6; interaction is direct and is ATP-dependent. Interacts with PEX1; interaction is indirect and is mediated via interaction with PEX6. Widely expressed. Highly expressed in kidney, liver, brain and skeletal muscles. Expressed at intermediate level in pancreas, placenta and heart. Weakly expressed in lung.

The protein localises to the peroxisome membrane. In terms of biological role, peroxisomal docking factor that anchors PEX1 and PEX6 to peroxisome membranes. PEX26 is therefore required for the formation of the PEX1-PEX6 AAA ATPase complex, a complex that mediates the extraction of the PEX5 receptor from peroxisomal membrane. This chain is Peroxisome assembly protein 26, found in Homo sapiens (Human).